The chain runs to 656 residues: Rab proteins geranylgeranyltransferase component A 2 (656 aa).

Disordered regions lie at residues 188 to 209 and 609 to 656; these read MHTV…EDKA and PPPN…HLQN. Positions 639–656 are enriched in basic and acidic residues; sequence ESSEESKNLESPEKHLQN. Residue serine 649 is modified to Phosphoserine.

It belongs to the Rab GDI family. Monomer. Heterotrimer composed of RABGGTA, RABGGTB and CHML; within this trimer, RABGGTA and RABGGTB form the catalytic component B, while CHML (component A) mediates Rab protein binding. Interacts with RAB1A, RAB7A and RAB27A, but has much lower affinity for RAB1A, RAB7A and RAB27A than CHM. Interacts with the non-phosphorylated forms of RAB3A, RAB3B, RAB3C, RAB3D, RAB5B, RAB5C, RAB8A, RAB8B, RAB10, RAB12, RAB35, and RAB43.

The protein localises to the cytoplasm. The protein resides in the cytosol. Its function is as follows. Substrate-binding subunit (component A) of the Rab geranylgeranyltransferase (GGTase) complex. Binds unprenylated Rab proteins and presents the substrate peptide to the catalytic component B. The component A is thought to be regenerated by transferring its prenylated Rab back to the donor membrane. Less effective than CHM in supporting prenylation of Rab3 family. The protein is Rab proteins geranylgeranyltransferase component A 2 (CHML) of Homo sapiens (Human).